Reading from the N-terminus, the 406-residue chain is Argininosuccinate synthase (406 aa).

Residues 11 to 19 (AYSGGLDTS) and Ala38 each bind ATP. L-citrulline-binding residues include Tyr91 and Ser96. Gly121 lines the ATP pocket. Residues Thr123, Asn127, and Asp128 each coordinate L-aspartate. Asn127 serves as a coordination point for L-citrulline. 5 residues coordinate L-citrulline: Arg131, Ser181, Ser190, Glu266, and Tyr278.

The protein belongs to the argininosuccinate synthase family. Type 1 subfamily. Homotetramer.

It is found in the cytoplasm. It catalyses the reaction L-citrulline + L-aspartate + ATP = 2-(N(omega)-L-arginino)succinate + AMP + diphosphate + H(+). It functions in the pathway amino-acid biosynthesis; L-arginine biosynthesis; L-arginine from L-ornithine and carbamoyl phosphate: step 2/3. The chain is Argininosuccinate synthase from Campylobacter jejuni subsp. jejuni serotype O:6 (strain 81116 / NCTC 11828).